A 919-amino-acid polypeptide reads, in one-letter code: Puromycin-sensitive aminopeptidase (919 aa).

Substrate is bound by residues glutamate 180 and 316 to 320 (GAMEN). Histidine 352 lines the Zn(2+) pocket. The active-site Proton acceptor is glutamate 353. Zn(2+) is bound by residues histidine 356 and glutamate 375. At tyrosine 464 the chain carries 3'-nitrotyrosine. Positions 726–730 (RRRFK) match the Nuclear localization signal motif.

It belongs to the peptidase M1 family. As to quaternary structure, monomer. Requires Zn(2+) as cofactor. As to expression, detected in liver, epithelium of renal tubules, epithelium of small and large intestine, gastric epithelial cells, and alveoli of the lung (at protein level).

The protein resides in the cytoplasm. The protein localises to the cytosol. It is found in the nucleus. It catalyses the reaction Release of an N-terminal amino acid, preferentially alanine, from a wide range of peptides, amides and arylamides.. With respect to regulation, strongly inhibited by bestatin, leuhistin, actinonin, amastatin, 1,10-phenanthroline, DFP, PCMBS, Zn(2+), Cd(2+), Co(2+), Cu(2+), Hg(2+), EDTA and puromycin. Not inhibited by PMSF, and only slightly inhibited by leupeptin and aprotinin. Activity is increased by Mg(2+) and Ca(2+). In terms of biological role, aminopeptidase with broad substrate specificity for several peptides. Involved in proteolytic events essential for cell growth and viability. May act as regulator of neuropeptide activity. Plays a role in the antigen-processing pathway for MHC class I molecules. Involved in the N-terminal trimming of cytotoxic T-cell epitope precursors. Digests the poly-Q peptides found in many cellular proteins. Digests tau from normal brain more efficiently than tau from Alzheimer disease brain. The polypeptide is Puromycin-sensitive aminopeptidase (NPEPPS) (Homo sapiens (Human)).